Here is a 227-residue protein sequence, read N- to C-terminus: Cytidylate kinase (227 aa).

12–20 (GPSGAGKGT) is an ATP binding site.

Belongs to the cytidylate kinase family. Type 1 subfamily.

It localises to the cytoplasm. The enzyme catalyses CMP + ATP = CDP + ADP. It carries out the reaction dCMP + ATP = dCDP + ADP. This chain is Cytidylate kinase, found in Marinomonas sp. (strain MWYL1).